The sequence spans 403 residues: Argininosuccinate synthase (403 aa).

Residue 9–17 coordinates ATP; that stretch reads AYSGGLDTS. Tyrosine 86 lines the L-citrulline pocket. Glycine 116 is a binding site for ATP. Threonine 118, asparagine 122, and aspartate 123 together coordinate L-aspartate. L-citrulline is bound at residue asparagine 122. Residues arginine 126, serine 174, serine 183, glutamate 259, and tyrosine 271 each coordinate L-citrulline.

Belongs to the argininosuccinate synthase family. Type 1 subfamily. As to quaternary structure, homotetramer.

It is found in the cytoplasm. It catalyses the reaction L-citrulline + L-aspartate + ATP = 2-(N(omega)-L-arginino)succinate + AMP + diphosphate + H(+). It functions in the pathway amino-acid biosynthesis; L-arginine biosynthesis; L-arginine from L-ornithine and carbamoyl phosphate: step 2/3. This is Argininosuccinate synthase from Shouchella clausii (strain KSM-K16) (Alkalihalobacillus clausii).